A 264-amino-acid chain; its full sequence is tRNA pseudouridine synthase A (264 aa).

Residue Asp-51 is the Nucleophile of the active site. Tyr-109 is a binding site for substrate.

The protein belongs to the tRNA pseudouridine synthase TruA family. Homodimer.

The enzyme catalyses uridine(38/39/40) in tRNA = pseudouridine(38/39/40) in tRNA. Its function is as follows. Formation of pseudouridine at positions 38, 39 and 40 in the anticodon stem and loop of transfer RNAs. The sequence is that of tRNA pseudouridine synthase A from Actinobacillus succinogenes (strain ATCC 55618 / DSM 22257 / CCUG 43843 / 130Z).